Here is a 266-residue protein sequence, read N- to C-terminus: Probable phosphoadenosine phosphosulfate reductase (266 aa).

Residues 219–246 (TQPVREGEDERAGRWRGREKTECGLHSH) are disordered. Residues 223-243 (REGEDERAGRWRGREKTECGL) show a composition bias toward basic and acidic residues.

Belongs to the PAPS reductase family. CysH subfamily.

It is found in the cytoplasm. The protein localises to the nucleus. It carries out the reaction [thioredoxin]-disulfide + sulfite + adenosine 3',5'-bisphosphate + 2 H(+) = [thioredoxin]-dithiol + 3'-phosphoadenylyl sulfate. It participates in sulfur metabolism; hydrogen sulfide biosynthesis; sulfite from sulfate: step 3/3. Its function is as follows. The NADP dependent reduction of PAPS into sulfite involves thioredoxin which probably plays the role of a thiol carrier. Required for methionine synthesis. In Schizosaccharomyces pombe (strain 972 / ATCC 24843) (Fission yeast), this protein is Probable phosphoadenosine phosphosulfate reductase (met16).